A 273-amino-acid chain; its full sequence is 4-hydroxy-tetrahydrodipicolinate reductase (273 aa).

NAD(+) contacts are provided by residues 12 to 17 (GAGGRM) and Glu-38. Arg-39 serves as a coordination point for NADP(+). Residues 102–104 (GTT) and 126–129 (AANF) each bind NAD(+). Catalysis depends on His-159, which acts as the Proton donor/acceptor. Residue His-160 coordinates (S)-2,3,4,5-tetrahydrodipicolinate. Lys-163 serves as the catalytic Proton donor. 169 to 170 (GT) provides a ligand contact to (S)-2,3,4,5-tetrahydrodipicolinate.

Belongs to the DapB family. In terms of assembly, homotetramer.

It is found in the cytoplasm. It carries out the reaction (S)-2,3,4,5-tetrahydrodipicolinate + NAD(+) + H2O = (2S,4S)-4-hydroxy-2,3,4,5-tetrahydrodipicolinate + NADH + H(+). It catalyses the reaction (S)-2,3,4,5-tetrahydrodipicolinate + NADP(+) + H2O = (2S,4S)-4-hydroxy-2,3,4,5-tetrahydrodipicolinate + NADPH + H(+). Its pathway is amino-acid biosynthesis; L-lysine biosynthesis via DAP pathway; (S)-tetrahydrodipicolinate from L-aspartate: step 4/4. Catalyzes the conversion of 4-hydroxy-tetrahydrodipicolinate (HTPA) to tetrahydrodipicolinate. This chain is 4-hydroxy-tetrahydrodipicolinate reductase, found in Salmonella schwarzengrund (strain CVM19633).